Here is a 48-residue protein sequence, read N- to C-terminus: uncharacterized protein (48 aa).

Positions 1-48 (MSRRMGGGMPKINLSGAIPNNNTSTPSTPTLRSSVSVSSSNSRGLFLA) are disordered. Over residues 20-48 (NNNTSTPSTPTLRSSVSVSSSNSRGLFLA) the composition is skewed to low complexity.

This is an uncharacterized protein from Dictyostelium discoideum (Social amoeba).